We begin with the raw amino-acid sequence, 715 residues long: MTDSAIGNVYDPRALPDYDREFIHPDDLRRFENALNDQDVLPLVALNDWRPVYQRVRKTRGRRKEPRRTKDETREGVLYTVLKWPFLAFVLGWISFLGVAYILTRFYIFIYEQWVSWRGKRQSLRKQLYVQTNYRDWLKAAEALDAHLGNHAWKEIDENAYYDHITINKLVSQLRKLRQDAEWEMHHEQVNAAESPAVEELCTILEACVKNNFAGVENPRLYSETYSGTKVLVQEYVDEVKACLELVAESKQISDEDKYHHFKHLDTNFGRTALCLSGGATFAYYHFGVVRALLDNNVLPEIITGTSGGALVAALVATRTDEELKQLLVPALAHRIRACHEGFTTWVRRWWRTGARFDTLEWARQCSWFCRGSTTFREAYERTGRILNVSCVPSDPHSPTILANYLTSPNCVIWSAVLASAAVPGILNPVVLMTKKRDGTLAPYSFGHKWKDGSLRTDIPIKALNLHFNVNFTIVSQVNPHINLFFFSSRGAVGRPVTHRKGRGWRGGFLGSAIEQYIKLDMNKWLRVLRHLELLPRPMGQDWSEIWLQKFSGTVTIWPKTVPSDFYYILSDPTPERLARMIHMGQQSAFPKIQFIKNRLKIEYAIIKGLQQTAPRGGGRATSPTQLRLRNGHGNGPVNPIDERLDQNLPERTGEYSKEADANSAEMSDSSGVDSATASALREARHPRRNSMLVEMQRQSAVFFDDVDSDTWKGQ.

Residues 84–104 traverse the membrane as a helical segment; it reads WPFLAFVLGWISFLGVAYILT. The PNPLA domain occupies 274–465; that stretch reads LCLSGGATFA…RTDIPIKALN (192 aa). Residues 305 to 309 carry the GXSXG motif; it reads GTSGG. The active-site Nucleophile is the serine 307. Catalysis depends on aspartate 452, which acts as the Proton acceptor. Residues 613–715 form a disordered region; sequence TAPRGGGRAT…DVDSDTWKGQ (103 aa). Basic and acidic residues predominate over residues 652-661; the sequence is RTGEYSKEAD. Residues 665–678 are compositionally biased toward polar residues; sequence AEMSDSSGVDSATA.

It belongs to the PLPL family.

The protein localises to the membrane. Probable lipid hydrolase. This is Patatin-like phospholipase domain-containing protein ATEG_02594 from Aspergillus terreus (strain NIH 2624 / FGSC A1156).